Here is a 343-residue protein sequence, read N- to C-terminus: Cell division protein ZipA (343 aa).

At 1–4 the chain is on the periplasmic side; the sequence is MDLN. The chain crosses the membrane as a helical span at residues 5–25; the sequence is TILIILGILALIGLVAHGIWS. The Cytoplasmic portion of the chain corresponds to 26–343; sequence NRREKSQYFD…MAEAAYLARV (318 aa). The interval 39-98 is disordered; that stretch reads AFHRNPQSTGRPSAQASQPMTPNFAQPAKETEQIRQTYQEPQVRQMSSSPEQQTRPTAQA. Composition is skewed to polar residues over residues 43–62 and 72–95; these read NPQS…TPNF and IRQT…TRPT.

This sequence belongs to the ZipA family. Interacts with FtsZ via their C-terminal domains.

It localises to the cell inner membrane. In terms of biological role, essential cell division protein that stabilizes the FtsZ protofilaments by cross-linking them and that serves as a cytoplasmic membrane anchor for the Z ring. Also required for the recruitment to the septal ring of downstream cell division proteins. This Actinobacillus succinogenes (strain ATCC 55618 / DSM 22257 / CCUG 43843 / 130Z) protein is Cell division protein ZipA.